The following is a 284-amino-acid chain: D-tagatose-1,6-bisphosphate aldolase subunit GatY (284 aa).

Asp-82 (proton donor) is an active-site residue. Positions 83 and 180 each coordinate Zn(2+). Gly-181 is a binding site for dihydroxyacetone phosphate. Residue His-208 coordinates Zn(2+). Residues 209 to 211 and 230 to 233 each bind dihydroxyacetone phosphate; these read GAS and NVAT.

Belongs to the class II fructose-bisphosphate aldolase family. TagBP aldolase GatY subfamily. In terms of assembly, forms a complex with GatZ. It depends on Zn(2+) as a cofactor.

The enzyme catalyses D-tagatofuranose 1,6-bisphosphate = D-glyceraldehyde 3-phosphate + dihydroxyacetone phosphate. It functions in the pathway carbohydrate metabolism; D-tagatose 6-phosphate degradation; D-glyceraldehyde 3-phosphate and glycerone phosphate from D-tagatose 6-phosphate: step 2/2. In terms of biological role, catalytic subunit of the tagatose-1,6-bisphosphate aldolase GatYZ, which catalyzes the reversible aldol condensation of dihydroxyacetone phosphate (DHAP or glycerone-phosphate) with glyceraldehyde 3-phosphate (G3P) to produce tagatose 1,6-bisphosphate (TBP). Requires GatZ subunit for full activity and stability. Is involved in the catabolism of galactitol. The chain is D-tagatose-1,6-bisphosphate aldolase subunit GatY from Shigella flexneri serotype 5b (strain 8401).